The chain runs to 744 residues: FHF complex subunit HOOK-interacting protein 2B (744 aa).

2 disordered regions span residues 184–213 and 510–530; these read KTAR…LNRD and LDSG…SSDG. Over residues 197 to 213 the composition is skewed to basic and acidic residues; the sequence is AGYRDKDCPHSDALNRD.

Belongs to the FHIP family. In terms of tissue distribution, expressed in colon.

In terms of biological role, able to activate MAPK/ERK and TGFB signaling pathways. May regulate the activity of genes involved in intestinal barrier function and immunoprotective inflammation. May play a role in cell proliferation. This chain is FHF complex subunit HOOK-interacting protein 2B, found in Mus musculus (Mouse).